A 111-amino-acid polypeptide reads, in one-letter code: Resistin-like beta (111 aa).

Residues 1–23 form the signal peptide; that stretch reads MGPSSCLLLILIPLLQLINPGST. Disulfide bonds link cysteine 55/cysteine 108, cysteine 67/cysteine 107, cysteine 76/cysteine 93, cysteine 78/cysteine 95, and cysteine 82/cysteine 97.

The protein belongs to the resistin/FIZZ family. As to quaternary structure, homodimer; disulfide-linked. As to expression, expressed only in the gastrointestinal tract, particularly the colon.

Its subcellular location is the secreted. In terms of biological role, probable hormone. This chain is Resistin-like beta (RETNLB), found in Homo sapiens (Human).